The sequence spans 434 residues: Serine/threonine-protein kinase Sgk1-B (434 aa).

A disordered region spans residues 68–94 (ESELLNENSSPPPSHSQQINLGPSSNP). Positions 101–358 (FQFLKIIGKG…FMEIKNHIFF (258 aa)) constitute a Protein kinase domain. ATP is bound by residues 107-115 (IGKGSFGKV) and K130. Residue D225 is the Proton acceptor of the active site. Residues 359-434 (SPIDWDDLIN…SYAPPMDSYL (76 aa)) enclose the AGC-kinase C-terminal domain.

It belongs to the protein kinase superfamily. AGC Ser/Thr protein kinase family.

It is found in the cytoplasm. It localises to the nucleus. Its subcellular location is the endoplasmic reticulum. It catalyses the reaction L-seryl-[protein] + ATP = O-phospho-L-seryl-[protein] + ADP + H(+). It carries out the reaction L-threonyl-[protein] + ATP = O-phospho-L-threonyl-[protein] + ADP + H(+). In terms of biological role, protein kinase that may play an important role in cellular stress response. Plays an important role in activating certain potassium, sodium, and chloride channels, suggesting an involvement in the regulation of processes such as cell survival, neuronal excitability and renal sodium excretion. The protein is Serine/threonine-protein kinase Sgk1-B (sgk1-b) of Xenopus laevis (African clawed frog).